Consider the following 581-residue polypeptide: Adenine deaminase (581 aa).

The protein belongs to the metallo-dependent hydrolases superfamily. Adenine deaminase family. It depends on Mn(2+) as a cofactor.

It catalyses the reaction adenine + H2O + H(+) = hypoxanthine + NH4(+). The chain is Adenine deaminase from Brucella suis biovar 1 (strain 1330).